A 106-amino-acid chain; its full sequence is Colipase A (106 aa).

The signal sequence occupies residues Leu1 to Ala11. Residues Val12 to Arg16 constitute a propeptide, enterostatin, activation peptide. 5 cysteine pairs are disulfide-bonded: Cys28-Cys39, Cys34-Cys50, Cys38-Cys72, Cys60-Cys80, and Cys74-Cys98. Trp63 is a taurodeoxycholate binding site.

The protein belongs to the colipase family. Forms a 1:1 stoichiometric complex with pancreatic lipase. Expressed by the pancreas.

It is found in the secreted. Colipase is a cofactor of pancreatic lipase. It allows the lipase to anchor itself to the lipid-water interface. Without colipase the enzyme is washed off by bile salts, which have an inhibitory effect on the lipase. Its function is as follows. Enterostatin has a biological activity as a satiety signal. The chain is Colipase A (CLPS1) from Equus caballus (Horse).